Here is a 391-residue protein sequence, read N- to C-terminus: Oxytocin receptor (391 aa).

Residues 1-38 (MEGAFAANWSAEAVNGSAAPPGTEGNRTAGPPQRNEAL) lie on the Extracellular side of the membrane. N-linked (GlcNAc...) asparagine glycans are attached at residues asparagine 8, asparagine 15, and asparagine 26. Residues 39 to 63 (ARVEVAVLSLILFLALSGNACVLLA) traverse the membrane as a helical segment. Residues 64 to 74 (LRTTRHKHSRL) lie on the Cytoplasmic side of the membrane. The chain crosses the membrane as a helical span at residues 75-97 (FFFMKHLSIADLAVAVFQVLPQL). Topologically, residues 98–113 (LWDITFRFYGPDLLCR) are extracellular. The cysteines at positions 112 and 187 are disulfide-linked. The helical transmembrane segment at 114 to 135 (LVKYLQVVGMFASTYLLLLMSL) threads the bilayer. Residues 136-154 (DRCLAICQPLRSLRRRTDR) are Cytoplasmic-facing. A helical transmembrane segment spans residues 155–175 (LAVLATWLGCLVASAPQVHIF). At 176–202 (SLREVADGVFDCWAVFIQPWGPKAYIT) the chain is on the extracellular side. Residues 203 to 225 (WITLAVYIVPVIVLAACYGLISF) traverse the membrane as a helical segment. Over 226-277 (KIWQNLRLKTEAAAAEASAGAEGAAADCAGRAALARVSNVKLISKAKIRTVK) the chain is Cytoplasmic. The helical transmembrane segment at 278-296 (MTFIVVLAFIVCWTPFFFK) threads the bilayer. The Extracellular portion of the chain corresponds to 297-311 (QMWSVWDADAPKEAS). The helical transmembrane segment at 312 to 334 (AFIIAMLLASLNSCCNPWIYMLF) threads the bilayer. Topologically, residues 335-391 (TGHLFQDLVQRFLCCSFRRLKGSQLGETSVTKKIHSYTFVLSRHSSSQRSCSQPSTV) are cytoplasmic. Serine 370 carries the post-translational modification Phosphoserine.

The protein belongs to the G-protein coupled receptor 1 family. Vasopressin/oxytocin receptor subfamily.

The protein resides in the cell membrane. In terms of biological role, receptor for oxytocin. The activity of this receptor is mediated by G proteins which activate a phosphatidylinositol-calcium second messenger system. This chain is Oxytocin receptor (OXTR), found in Ovis aries (Sheep).